Reading from the N-terminus, the 318-residue chain is Energy-coupling factor transporter ATP-binding protein EcfA2 (318 aa).

Positions 22–271 (LRAQGLKCVF…PEIMQTTSIA (250 aa)) constitute an ABC transporter domain. 59 to 66 (GNSGSGKS) contacts ATP.

The protein belongs to the ABC transporter superfamily. Energy-coupling factor EcfA family. As to quaternary structure, forms a stable energy-coupling factor (ECF) transporter complex composed of 2 membrane-embedded substrate-binding proteins (S component), 2 ATP-binding proteins (A component) and 2 transmembrane proteins (T component).

It is found in the cell membrane. In terms of biological role, ATP-binding (A) component of a common energy-coupling factor (ECF) ABC-transporter complex. Unlike classic ABC transporters this ECF transporter provides the energy necessary to transport a number of different substrates. The polypeptide is Energy-coupling factor transporter ATP-binding protein EcfA2 (Mycoplasmoides gallisepticum (strain R(low / passage 15 / clone 2)) (Mycoplasma gallisepticum)).